A 100-amino-acid chain; its full sequence is NADH-quinone oxidoreductase subunit K (100 aa).

The next 3 helical transmembrane spans lie at 1-21 (MIGLNHYLIVSGLLFCIGLAG), 28-48 (ILLLFFSTEIMLNAINIGFIA), and 64-84 (FIIAIAASEVAIGLGLVILWF).

It belongs to the complex I subunit 4L family. As to quaternary structure, NDH-1 is composed of 14 different subunits. Subunits NuoA, H, J, K, L, M, N constitute the membrane sector of the complex.

Its subcellular location is the cell inner membrane. It catalyses the reaction a quinone + NADH + 5 H(+)(in) = a quinol + NAD(+) + 4 H(+)(out). Functionally, NDH-1 shuttles electrons from NADH, via FMN and iron-sulfur (Fe-S) centers, to quinones in the respiratory chain. The immediate electron acceptor for the enzyme in this species is believed to be ubiquinone. Couples the redox reaction to proton translocation (for every two electrons transferred, four hydrogen ions are translocated across the cytoplasmic membrane), and thus conserves the redox energy in a proton gradient. This chain is NADH-quinone oxidoreductase subunit K, found in Helicobacter acinonychis (strain Sheeba).